Reading from the N-terminus, the 132-residue chain is Large ribosomal subunit protein uL14 (132 aa).

This sequence belongs to the universal ribosomal protein uL14 family. Part of the 50S ribosomal subunit. Forms a cluster with proteins L3 and L24e, part of which may contact the 16S rRNA in 2 intersubunit bridges.

In terms of biological role, binds to 23S rRNA. Forms part of two intersubunit bridges in the 70S ribosome. This Methanococcus maripaludis (strain C5 / ATCC BAA-1333) protein is Large ribosomal subunit protein uL14.